Here is a 141-residue protein sequence, read N- to C-terminus: Large ribosomal subunit protein uL11 (141 aa).

It belongs to the universal ribosomal protein uL11 family. In terms of assembly, part of the ribosomal stalk of the 50S ribosomal subunit. Interacts with L10 and the large rRNA to form the base of the stalk. L10 forms an elongated spine to which L12 dimers bind in a sequential fashion forming a multimeric L10(L12)X complex. In terms of processing, one or more lysine residues are methylated.

In terms of biological role, forms part of the ribosomal stalk which helps the ribosome interact with GTP-bound translation factors. The polypeptide is Large ribosomal subunit protein uL11 (Thermomicrobium roseum (strain ATCC 27502 / DSM 5159 / P-2)).